The sequence spans 355 residues: Probable dual-specificity RNA methyltransferase RlmN (355 aa).

The active-site Proton acceptor is Glu89. The Radical SAM core domain maps to 95–322 (YENRKTVCLS…KRLGVPTSIR (228 aa)). A disulfide bond links Cys102 and Cys333. Cys109, Cys113, and Cys116 together coordinate [4Fe-4S] cluster. S-adenosyl-L-methionine is bound by residues 159–160 (GE), Ser191, 214–216 (SLH), and Asn290. Catalysis depends on Cys333, which acts as the S-methylcysteine intermediate.

The protein belongs to the radical SAM superfamily. RlmN family. The cofactor is [4Fe-4S] cluster.

It is found in the cytoplasm. It catalyses the reaction adenosine(2503) in 23S rRNA + 2 reduced [2Fe-2S]-[ferredoxin] + 2 S-adenosyl-L-methionine = 2-methyladenosine(2503) in 23S rRNA + 5'-deoxyadenosine + L-methionine + 2 oxidized [2Fe-2S]-[ferredoxin] + S-adenosyl-L-homocysteine. The enzyme catalyses adenosine(37) in tRNA + 2 reduced [2Fe-2S]-[ferredoxin] + 2 S-adenosyl-L-methionine = 2-methyladenosine(37) in tRNA + 5'-deoxyadenosine + L-methionine + 2 oxidized [2Fe-2S]-[ferredoxin] + S-adenosyl-L-homocysteine. Functionally, specifically methylates position 2 of adenine 2503 in 23S rRNA and position 2 of adenine 37 in tRNAs. The chain is Probable dual-specificity RNA methyltransferase RlmN from Thermus thermophilus (strain ATCC 27634 / DSM 579 / HB8).